Reading from the N-terminus, the 184-residue chain is MKRIVTLVSREQAEVGHRFRVFGIPDECRECRLYSVCLGRLTPGRSYIVVEVRPSMGQKCKITGGEMVPVVVEETPIVGLLPLNKALEGVVVTYEDECAGCDGCPSNMVSKGEKIKVVKVLGRAKCRGREFAIVEFYALGAPSLSGASSAGISQAPSRVPLSKPPSKSPSPQKSSPRGPTSRLP.

Low complexity predominate over residues 146–161 (GASSAGISQAPSRVPL). The tract at residues 146-184 (GASSAGISQAPSRVPLSKPPSKSPSPQKSSPRGPTSRLP) is disordered.

This sequence belongs to the UPF0179 family.

This Pyrobaculum calidifontis (strain DSM 21063 / JCM 11548 / VA1) protein is UPF0179 protein Pcal_2106.